We begin with the raw amino-acid sequence, 270 residues long: tRNA pseudouridine synthase A (270 aa).

The active-site Nucleophile is Asp60. The interval 107-111 is RNA binding; it reads FHARF. Tyr118 provides a ligand contact to substrate. The tract at residues 168-172 is interaction with tRNA; that stretch reads QCQSR.

This sequence belongs to the tRNA pseudouridine synthase TruA family. Homodimer.

The catalysed reaction is uridine(38/39/40) in tRNA = pseudouridine(38/39/40) in tRNA. Its function is as follows. Formation of pseudouridine at positions 38, 39 and 40 in the anticodon stem and loop of transfer RNAs. The chain is tRNA pseudouridine synthase A from Klebsiella pneumoniae (strain 342).